The following is a 434-amino-acid chain: Glutamyl-tRNA reductase (434 aa).

Residues 49-52, serine 109, 114-116, and glutamine 120 contribute to the substrate site; these read TCNR and EPQ. Cysteine 50 functions as the Nucleophile in the catalytic mechanism. 189-194 lines the NADP(+) pocket; it reads GAGEMC.

This sequence belongs to the glutamyl-tRNA reductase family. As to quaternary structure, homodimer.

It carries out the reaction (S)-4-amino-5-oxopentanoate + tRNA(Glu) + NADP(+) = L-glutamyl-tRNA(Glu) + NADPH + H(+). The protein operates within porphyrin-containing compound metabolism; protoporphyrin-IX biosynthesis; 5-aminolevulinate from L-glutamyl-tRNA(Glu): step 1/2. Functionally, catalyzes the NADPH-dependent reduction of glutamyl-tRNA(Glu) to glutamate 1-semialdehyde (GSA). The chain is Glutamyl-tRNA reductase from Geobacter metallireducens (strain ATCC 53774 / DSM 7210 / GS-15).